The chain runs to 141 residues: Protein C19orf12 homolog (141 aa).

Residues Leu33 to Val53 traverse the membrane as a helical segment.

It belongs to the C19orf12 family.

The protein resides in the mitochondrion. Its subcellular location is the mitochondrion membrane. It localises to the endoplasmic reticulum. The protein localises to the cytoplasm. It is found in the cytosol. This is Protein C19orf12 homolog from Xenopus tropicalis (Western clawed frog).